The chain runs to 416 residues: Inhibitor of growth protein 3 (416 aa).

3 disordered regions span residues 126-165 (LDTP…PEKK), 177-198 (SDAS…STNN), and 283-319 (QTLT…SSSL). The segment covering 136–152 (HHVHSHSSGEKRKHIPS) has biased composition (basic residues). Over residues 156-165 (STTDHVPEKK) the composition is skewed to basic and acidic residues. A compositionally biased stretch (polar residues) spans 177–187 (SDASKENTAGC). Composition is skewed to low complexity over residues 189–198 (TNLSSSSTNN), 283–293 (QTLTSSATTDS), and 302–319 (NNKS…SSSL). The PHD-type zinc-finger motif lies at 358–407 (PRYCICNQVSYGEMVGCDNQDCPIEWFHYGCVGLSEAPKGKWYCPQCTAA). Cys361, Cys363, Cys374, Cys379, His385, Cys388, Cys401, and Cys404 together coordinate Zn(2+).

It belongs to the ING family. As to quaternary structure, interacts with H3K4me3 and to a lesser extent with H3K4me2. Component of the NuA4 histone acetyltransferase complex.

The protein resides in the nucleus. Functionally, component of the NuA4 histone acetyltransferase (HAT) complex which is involved in transcriptional activation of select genes principally by acetylation of nucleosomal histone H4 and H2A. This modification may both alter nucleosome - DNA interactions and promote interaction of the modified histones with other proteins which positively regulate transcription. NuA4 may also play a direct role in DNA repair when directly recruited to sites of DNA damage. This chain is Inhibitor of growth protein 3 (ing3), found in Xenopus laevis (African clawed frog).